The chain runs to 830 residues: Vacuolar protein sorting-associated protein 11 homolog (830 aa).

An RING-type; atypical zinc finger spans residues 733 to 775 (CDICREMLSMQSIYFLCQHSFHEECLNYKSTKRQEKFLCIICK).

It belongs to the VPS11 family. Part of the homotypic fusion and vacuole protein sorting (HOPS) complex, composed of Vps16A, car/Vps33A, dor/Vps18, Vps39, Vps11 and lt/Vps41. Unlike in other species, not part of the class C core vacuole/endosome tethering (CORVET) complex.

The protein localises to the late endosome membrane. Its subcellular location is the lysosome membrane. Its function is as follows. Part of the homotypic fusion and vacuole protein sorting (HOPS) tethering complex involved in endo-lysosomal vesicle trafficking and lysosome biogenesis, but unlike in many other species does not form part of the class C core vacuole/endosome tethering (CORVET) complex. The HOPS complex facilitates docking and fusion of lysosomes with late endosomes and several other types of vesicles. The HOPS complex is also involved in autophagy, pigment granule biogenesis and crinophagy (the elimination of unused secretory granules through fusion with lysosomes). The HOPS complex probably instigates autophagosome-lysosome fusion by binding autophagosome-associated Syx17/syntaxin 17 and promoting assembly of the trans-SNARE complex. Independent of Syx17/syntaxin 17, HOPS is involved in biosynthetic transport to lysosomes and lysosome-related organelles such as eye-pigment granules. Required for autophagocytosis-dependent remodeling of myofibrils and transverse-tubules (T-tubules) during metamorphosis. The chain is Vacuolar protein sorting-associated protein 11 homolog from Drosophila melanogaster (Fruit fly).